The primary structure comprises 229 residues: 5'-methylthioadenosine/S-adenosylhomocysteine nucleosidase (229 aa).

Glutamate 12 functions as the Proton acceptor in the catalytic mechanism. Residues glycine 78, isoleucine 152, and 173 to 174 (ME) contribute to the substrate site. Catalysis depends on aspartate 197, which acts as the Proton donor.

Belongs to the PNP/UDP phosphorylase family. MtnN subfamily.

The enzyme catalyses S-adenosyl-L-homocysteine + H2O = S-(5-deoxy-D-ribos-5-yl)-L-homocysteine + adenine. The catalysed reaction is S-methyl-5'-thioadenosine + H2O = 5-(methylsulfanyl)-D-ribose + adenine. It carries out the reaction 5'-deoxyadenosine + H2O = 5-deoxy-D-ribose + adenine. It functions in the pathway amino-acid biosynthesis; L-methionine biosynthesis via salvage pathway; S-methyl-5-thio-alpha-D-ribose 1-phosphate from S-methyl-5'-thioadenosine (hydrolase route): step 1/2. In terms of biological role, catalyzes the irreversible cleavage of the glycosidic bond in both 5'-methylthioadenosine (MTA) and S-adenosylhomocysteine (SAH/AdoHcy) to adenine and the corresponding thioribose, 5'-methylthioribose and S-ribosylhomocysteine, respectively. Also cleaves 5'-deoxyadenosine, a toxic by-product of radical S-adenosylmethionine (SAM) enzymes, into 5-deoxyribose and adenine. This chain is 5'-methylthioadenosine/S-adenosylhomocysteine nucleosidase, found in Baumannia cicadellinicola subsp. Homalodisca coagulata.